The sequence spans 430 residues: Adenylosuccinate synthetase (430 aa).

GTP contacts are provided by residues 13–19 (GDEGKGK) and 41–43 (GHT). Asp14 (proton acceptor) is an active-site residue. 2 residues coordinate Mg(2+): Asp14 and Gly41. IMP is bound by residues 14–17 (DEGK), 39–42 (NAGH), Thr130, Arg144, Gln225, Thr240, and Arg304. His42 functions as the Proton donor in the catalytic mechanism. Substrate is bound at residue 300–306 (ATTGRAR). GTP is bound by residues Arg306, 332–334 (KLD), and 414–416 (STG).

Belongs to the adenylosuccinate synthetase family. In terms of assembly, homodimer. Mg(2+) serves as cofactor.

It localises to the cytoplasm. The enzyme catalyses IMP + L-aspartate + GTP = N(6)-(1,2-dicarboxyethyl)-AMP + GDP + phosphate + 2 H(+). The protein operates within purine metabolism; AMP biosynthesis via de novo pathway; AMP from IMP: step 1/2. In terms of biological role, plays an important role in the de novo pathway of purine nucleotide biosynthesis. Catalyzes the first committed step in the biosynthesis of AMP from IMP. The chain is Adenylosuccinate synthetase from Pseudomonas paraeruginosa (strain DSM 24068 / PA7) (Pseudomonas aeruginosa (strain PA7)).